A 239-amino-acid chain; its full sequence is Orotidine 5'-phosphate decarboxylase (239 aa).

Residues D10, K33, 60–69 (DLKLYDIPNT), T124, R186, Q195, G215, and R216 contribute to the substrate site. K62 acts as the Proton donor in catalysis.

It belongs to the OMP decarboxylase family. Type 1 subfamily. Homodimer.

The catalysed reaction is orotidine 5'-phosphate + H(+) = UMP + CO2. It functions in the pathway pyrimidine metabolism; UMP biosynthesis via de novo pathway; UMP from orotate: step 2/2. Catalyzes the decarboxylation of orotidine 5'-monophosphate (OMP) to uridine 5'-monophosphate (UMP). This chain is Orotidine 5'-phosphate decarboxylase, found in Latilactobacillus sakei subsp. sakei (strain 23K) (Lactobacillus sakei subsp. sakei).